The chain runs to 385 residues: 3-hydroxyisobutyryl-CoA hydrolase, mitochondrial (385 aa).

Glutamate 120, glycine 145, glutamate 168, and aspartate 176 together coordinate substrate.

This sequence belongs to the enoyl-CoA hydratase/isomerase family.

Its subcellular location is the mitochondrion. It carries out the reaction 3-hydroxy-2-methylpropanoyl-CoA + H2O = 3-hydroxy-2-methylpropanoate + CoA + H(+). The protein operates within amino-acid degradation; L-valine degradation. In terms of biological role, hydrolyzes 3-hydroxyisobutyryl-CoA (HIBYL-CoA), a saline catabolite. Has high activity toward isobutyryl-CoA. Could be an isobutyryl-CoA dehydrogenase that functions in valine catabolism. Also hydrolyzes 3-hydroxypropanoyl-CoA. In Gallus gallus (Chicken), this protein is 3-hydroxyisobutyryl-CoA hydrolase, mitochondrial (HIBCH).